Consider the following 343-residue polypeptide: Lactamase-like protein nscB (343 aa).

Zn(2+) contacts are provided by His118, His120, Asp122, and His123. Asp122 serves as the catalytic Proton donor/acceptor.

It belongs to the metallo-beta-lactamase superfamily. Requires Zn(2+) as cofactor.

Its pathway is secondary metabolite biosynthesis. In terms of biological role, lactamase-like protein; part of the gene cluster that mediates the biosynthesis of neosartoricin B, a prenylated anthracenone that probably exhibits T-cell antiproliferative activity, suggestive of a physiological role as an immunosuppressive agent. The non-reducing polyketide synthase nscA probably synthesizes and cyclizes the decaketide backbone. The hydrolase nscB then mediates the product release through hydrolysis followed by spontaneous decarboxylation. The prenyltransferase nscD catalyzes the addition of the dimethylallyl group to the aromatic C5. The FAD-dependent monooxygenase nscC is then responsible for the stereospecific hydroxylation at C2. Neosartoricin B can be converted into two additional compounds neosartoricins C and D. Neosartoricin C is a spirocyclic compound that is cyclized through the attack of C3 hydroxyl on C14, followed by dehydration. On the other hand, neosartoricin D is a further cyclized compound in which attack of C2 on C14 in neosartoricin C results in the formation of the acetal-containing dioxabicyclo-octanone ring. Both of these compounds are novel and possibly represent related metabolites of the gene cluster. This is Lactamase-like protein nscB from Arthroderma otae (strain ATCC MYA-4605 / CBS 113480) (Microsporum canis).